The primary structure comprises 235 residues: Glycerol-3-phosphate acyltransferase (235 aa).

A run of 6 helical transmembrane segments spans residues 4 to 24, 56 to 76, 94 to 114, 122 to 142, 152 to 172, and 191 to 211; these read LIAI…IMAG, AVTL…VAFF, LLAG…GFKG, AGML…IFLL, VASI…KYIF, and FHDS…LAIL.

The protein belongs to the PlsY family. Probably interacts with PlsX.

It localises to the cell inner membrane. The enzyme catalyses an acyl phosphate + sn-glycerol 3-phosphate = a 1-acyl-sn-glycero-3-phosphate + phosphate. The protein operates within lipid metabolism; phospholipid metabolism. Its function is as follows. Catalyzes the transfer of an acyl group from acyl-phosphate (acyl-PO(4)) to glycerol-3-phosphate (G3P) to form lysophosphatidic acid (LPA). This enzyme utilizes acyl-phosphate as fatty acyl donor, but not acyl-CoA or acyl-ACP. This is Glycerol-3-phosphate acyltransferase from Chlorobium phaeobacteroides (strain DSM 266 / SMG 266 / 2430).